Here is a 346-residue protein sequence, read N- to C-terminus: Growth hormone-inducible transmembrane protein (346 aa).

The transit peptide at 1–45 (MLAARLVCLRTLPSRVFQPTFITKASPLVKNSITKNQWLLTPSRE) directs the protein to the mitochondrion. Residues 46–83 (YATKTRIRTHRGKTGQELKEAALEPSLEKVFKIDQMGK) lie on the Mitochondrial matrix side of the membrane. A helical membrane pass occupies residues 84-104 (WFVAGGAAVGLGALCYYGLGM). The Mitochondrial intermembrane segment spans residues 105-126 (SNEIGAIEKAVIWPQYVKDRIH). A helical transmembrane segment spans residues 127–147 (STYMYLAGSIGLTALSALALA). At 148-160 (RSPALMNFMMTGS) the chain is on the mitochondrial matrix side. Residues 161 to 181 (WMTIGATFAAMIGAGMLVQSI) traverse the membrane as a helical segment. Residues 182 to 191 (SYEQSPGPKH) are Mitochondrial intermembrane-facing. The chain crosses the membrane as a helical span at residues 192–212 (LAWMLHSGVMGAVVAPLTILG). The Mitochondrial matrix portion of the chain corresponds to 213-214 (GP). Residues 215–235 (LLLRAAWYTAGIVGGLSTVAM) form a helical membrane-spanning segment. Topologically, residues 236–245 (CAPSEKFLNM) are mitochondrial intermembrane. The chain crosses the membrane as a helical span at residues 246–266 (GAPLGVGLGLVFASSLGSMFL). Topologically, residues 267 to 272 (PPTSVA) are mitochondrial matrix. The helical transmembrane segment at 273-293 (GATLYSVAMYGGLVLFSMFLL) threads the bilayer. Topologically, residues 294-346 (YDTQKVVKRAEITPAYGAQKYDPINSMLTIYMDTLNIFMRVATMLATGSNRKK) are mitochondrial intermembrane.

Belongs to the BI1 family. In terms of assembly, interacts with LETM1 and AFG3L2. Post-translationally, undergoes AFG3L2-mediated proteolytic degradation, upon hyperpolarization of mitochondria.

It localises to the mitochondrion inner membrane. Plays an important role in maintenance of mitochondrial morphology and in mediating either calcium or potassium/proton antiport. Mediates proton-dependent calcium efflux from mitochondrion. Also functions as an electroneutral mitochondrial proton/potassium exchanger. Required for the mitochondrial tubular network and cristae organization. Involved in apoptotic release of cytochrome c. Inhibits AFG3L2 proteolytic activity, stimulating respiration and stabilizing respiratory enzymes in actively respiring mitochondria. However, when mitochondria become hyperpolarized, GHITM loses its inhibitory activity toward AFG3L2 and the now active AFG3L2 turns first on GHITM and, if hyperpolarization persists, on other proteins of the mitochondria, leading to a broad remodeling of the proteome. The chain is Growth hormone-inducible transmembrane protein (Ghitm) from Rattus norvegicus (Rat).